Reading from the N-terminus, the 201-residue chain is Protease (201 aa).

Residues His-53, Asp-70, and Cys-121 contribute to the active site.

Belongs to the peptidase C5 family. As to quaternary structure, interacts with protease cofactor pVI-C; this interaction is necessary for protease activation.

Its subcellular location is the virion. The protein resides in the host nucleus. It carries out the reaction Cleaves proteins of the adenovirus and its host cell at two consensus sites: -Yaa-Xaa-Gly-Gly-|-Xaa- and -Yaa-Xaa-Gly-Xaa-|-Gly- (in which Yaa is Met, Ile or Leu, and Xaa is any amino acid).. Requires DNA and protease cofactor for maximal activation. Inside nascent virions, becomes partially activated by binding to the viral DNA, allowing it to cleave the cofactor that binds to the protease and fully activates it. Actin, like the viral protease cofactor, seems to act as a cofactor in the cleavage of cytokeratin 18 and of actin itself. Its function is as follows. Cleaves viral precursor proteins (pTP, pIIIa, pVI, pVII, pVIII, and pX) inside newly assembled particles giving rise to mature virions. Protease complexed to its cofactor slides along the viral DNA to specifically locate and cleave the viral precursors. Mature virions have a weakened organization compared to the unmature virions, thereby facilitating subsequent uncoating. Without maturation, the particle lacks infectivity and is unable to uncoat. Late in adenovirus infection, in the cytoplasm, may participate in the cytoskeleton destruction. Cleaves host cell cytoskeletal keratins K7 and K18. The chain is Protease from Equine adenovirus B serotype 2 (EAdV-2).